The primary structure comprises 634 residues: Putative lipase atg15 (634 aa).

The Cytoplasmic portion of the chain corresponds to 1–4 (MSIS). Residues 5–25 (GLLLSVALLPSVVSAHDHVYF) traverse the membrane as a helical; Signal-anchor for type II membrane protein segment. Over 26–634 (DPPSSGSPFL…CVGSTGTELR (609 aa)) the chain is Lumenal. Asparagine 150, asparagine 185, asparagine 207, asparagine 265, and asparagine 289 each carry an N-linked (GlcNAc...) asparagine glycan. The active-site Charge relay system is serine 305. Residue asparagine 451 is glycosylated (N-linked (GlcNAc...) asparagine). A disordered region spans residues 518–544 (PTTTTEATPAPSVTTTIPTPTTYPTSS).

It belongs to the AB hydrolase superfamily. Lipase family. In terms of assembly, binds to both phosphatidylinositol (PI) and phosphatidylinositol 3,5-bisphosphate (PIP2).

Its subcellular location is the endosome. The protein localises to the multivesicular body membrane. It is found in the prevacuolar compartment membrane. It carries out the reaction a triacylglycerol + H2O = a diacylglycerol + a fatty acid + H(+). Its function is as follows. Lipase which is essential for lysis of subvacuolar cytoplasm to vacuole targeted bodies and intravacuolar autophagic bodies. Involved in the lysis of intravacuolar multivesicular body (MVB) vesicles. The intravacuolar membrane disintegration by atg15 is critical to life span extension. The protein is Putative lipase atg15 (atg15) of Neosartorya fischeri (strain ATCC 1020 / DSM 3700 / CBS 544.65 / FGSC A1164 / JCM 1740 / NRRL 181 / WB 181) (Aspergillus fischerianus).